Consider the following 239-residue polypeptide: ATP synthase subunit a (239 aa).

5 helical membrane-spanning segments follow: residues 27 to 47 (GQVFLSSWIVIGALLAVVVLG), 86 to 106 (LPFIGTLFLFIFVSNWGGALI), 125 to 145 (INTTVAMALLVSLAFFYAGLS), 190 to 210 (LAVAVLASLVPLLVPLPVMLL), and 211 to 231 (GLFTSAIQALIFATLAAFYIG).

It belongs to the ATPase A chain family. F-type ATPases have 2 components, CF(1) - the catalytic core - and CF(0) - the membrane proton channel. CF(1) has five subunits: alpha(3), beta(3), gamma(1), delta(1), epsilon(1). CF(0) has four main subunits: a, b, b' and c.

The protein resides in the cellular thylakoid membrane. Its function is as follows. Key component of the proton channel; it plays a direct role in the translocation of protons across the membrane. The sequence is that of ATP synthase subunit a from Synechococcus sp. (strain RCC307).